A 221-amino-acid polypeptide reads, in one-letter code: Cytidylate kinase (221 aa).

11–19 is an ATP binding site; the sequence is GPTASGKGT.

This sequence belongs to the cytidylate kinase family. Type 1 subfamily.

It localises to the cytoplasm. The catalysed reaction is CMP + ATP = CDP + ADP. It catalyses the reaction dCMP + ATP = dCDP + ADP. This chain is Cytidylate kinase, found in Cupriavidus pinatubonensis (strain JMP 134 / LMG 1197) (Cupriavidus necator (strain JMP 134)).